A 322-amino-acid chain; its full sequence is Cysteine synthase (322 aa).

Hydrogen sulfide-binding residues include Asn8 and Arg35. Lys42 is modified (N6-(pyridoxal phosphate)lysine). Residues Asn72 and 177–181 each bind pyridoxal 5'-phosphate; that span reads GTGGT. Leu269 is a hydrogen sulfide binding site. Ser273 is a binding site for pyridoxal 5'-phosphate.

It belongs to the cysteine synthase/cystathionine beta-synthase family. In terms of assembly, homodimer. It depends on pyridoxal 5'-phosphate as a cofactor.

The enzyme catalyses O-acetyl-L-serine + hydrogen sulfide = L-cysteine + acetate. It functions in the pathway amino-acid biosynthesis; L-cysteine biosynthesis; L-cysteine from L-serine: step 2/2. This Buchnera aphidicola subsp. Schizaphis graminum (strain Sg) protein is Cysteine synthase (cysK).